The chain runs to 377 residues: Protein RecA (377 aa).

The span at 1 to 13 (MSNEGKPLQSTES) shows a compositional bias: polar residues. The segment at 1 to 20 (MSNEGKPLQSTESTKIDAKS) is disordered. 82–89 (GPESSGKT) is an ATP binding site. The tract at residues 346–377 (GSEVSANSMRPLASAARQASSRPKLSQVSANG) is disordered. The span at 362–377 (RQASSRPKLSQVSANG) shows a compositional bias: polar residues.

This sequence belongs to the RecA family.

Its subcellular location is the cytoplasm. Functionally, can catalyze the hydrolysis of ATP in the presence of single-stranded DNA, the ATP-dependent uptake of single-stranded DNA by duplex DNA, and the ATP-dependent hybridization of homologous single-stranded DNAs. It interacts with LexA causing its activation and leading to its autocatalytic cleavage. In Prochlorococcus marinus (strain NATL1A), this protein is Protein RecA.